We begin with the raw amino-acid sequence, 391 residues long: Phosphoglycerate kinase (391 aa).

Substrate-binding positions include 21–23, Arg-36, 59–62, Arg-113, and Arg-146; these read DLN and HLGR. Residues Lys-197, Glu-319, and 345-348 each bind ATP; that span reads GGDT.

This sequence belongs to the phosphoglycerate kinase family. As to quaternary structure, monomer.

The protein localises to the cytoplasm. The enzyme catalyses (2R)-3-phosphoglycerate + ATP = (2R)-3-phospho-glyceroyl phosphate + ADP. It functions in the pathway carbohydrate degradation; glycolysis; pyruvate from D-glyceraldehyde 3-phosphate: step 2/5. This Xanthomonas oryzae pv. oryzae (strain PXO99A) protein is Phosphoglycerate kinase.